The primary structure comprises 560 residues: General negative regulator of transcription subunit 5 (560 aa).

3 coiled-coil regions span residues 3-26 (QRKL…DFDD), 37-71 (SNSS…SKED), and 124-177 (KRDQ…NEMD). The interval 212-330 (CEIQPSSSNN…DSEQQLNFPP (119 aa)) is disordered. A compositionally biased stretch (polar residues) spans 215–237 (QPSSSNNEAPKEGNNQTSLSSIR). Positions 273–288 (SQSISSTPTPVSTDTP) are enriched in low complexity. Positions 299-311 (FDNSTLGTPTTHV) are enriched in polar residues. Thr306 bears the Phosphothreonine mark. Residue Lys338 forms a Glycyl lysine isopeptide (Lys-Gly) (interchain with G-Cter in ubiquitin) linkage. Phosphoserine is present on Ser377.

Belongs to the CNOT2/3/5 family. Forms a NOT protein complex that comprises NOT1, NOT2, NOT3, NOT4 and NOT5. Subunit of the 1.0 MDa CCR4-NOT core complex that contains CCR4, CAF1, NOT1, NOT2, NOT3, NOT4, NOT5, CAF40 and CAF130. In the complex interacts with NOT1 and NOT2. The core complex probably is part of a less characterized 1.9 MDa CCR4-NOT complex.

It localises to the cytoplasm. The protein resides in the nucleus. Its function is as follows. Acts as a component of the CCR4-NOT core complex, which in the nucleus seems to be a general transcription factor, and in the cytoplasm the major mRNA deadenylase involved in mRNA turnover. The NOT protein subcomplex negatively regulates the basal and activated transcription of many genes. Preferentially affects TC-type TATA element-dependent transcription. Could directly or indirectly inhibit component(s) of the general transcription machinery. The sequence is that of General negative regulator of transcription subunit 5 (NOT5) from Saccharomyces cerevisiae (strain ATCC 204508 / S288c) (Baker's yeast).